A 385-amino-acid polypeptide reads, in one-letter code: FK506-binding protein 5 (385 aa).

The PPIase FKBP-type domain maps to 26-115 (TNFVSVHYDA…RFEVELIGFW (90 aa)). 3 TPR repeats span residues 128-161 (AEKK…IQDL), 177-210 (VSIQ…DMTK), and 211-244 (IKAY…AIGL).

It catalyses the reaction [protein]-peptidylproline (omega=180) = [protein]-peptidylproline (omega=0). With respect to regulation, inhibited by both FK506 and rapamycin. Functionally, PPIases accelerate the folding of proteins. It catalyzes the cis-trans isomerization of proline imidic peptide bonds in oligopeptides. This is FK506-binding protein 5 (FKBP5) from Rhizopus delemar (strain RA 99-880 / ATCC MYA-4621 / FGSC 9543 / NRRL 43880) (Mucormycosis agent).